A 234-amino-acid polypeptide reads, in one-letter code: NAD-dependent protein deacylase (234 aa).

In terms of domain architecture, Deacetylase sirtuin-type spans 1–234 (MKNLVVLTGA…ELKQLLIPAP (234 aa)). 9-28 (GAGMSAESGISTFRDAGGLW) provides a ligand contact to NAD(+). Residues Y53 and R56 each contribute to the substrate site. Residue 86 to 89 (QNVD) coordinates NAD(+). The active-site Proton acceptor is H104. Residue 175 to 177 (GTS) coordinates NAD(+).

It belongs to the sirtuin family. Class III subfamily.

It is found in the cytoplasm. The catalysed reaction is N(6)-acetyl-L-lysyl-[protein] + NAD(+) + H2O = 2''-O-acetyl-ADP-D-ribose + nicotinamide + L-lysyl-[protein]. It catalyses the reaction N(6)-succinyl-L-lysyl-[protein] + NAD(+) + H2O = 2''-O-succinyl-ADP-D-ribose + nicotinamide + L-lysyl-[protein]. In terms of biological role, NAD-dependent lysine deacetylase and desuccinylase that specifically removes acetyl and succinyl groups on target proteins. Modulates the activities of several proteins which are inactive in their acylated form. This chain is NAD-dependent protein deacylase, found in Bacteroides thetaiotaomicron (strain ATCC 29148 / DSM 2079 / JCM 5827 / CCUG 10774 / NCTC 10582 / VPI-5482 / E50).